Here is a 124-residue protein sequence, read N- to C-terminus: Small ribosomal subunit protein uS12 (124 aa).

A disordered region spans residues 1–28 (MPTISQLVGSERKRLTKKTKSPALKSCP). Position 89 is a 3-methylthioaspartic acid (aspartate 89). The interval 104-124 (TAGVKDRRQSRSKYGAKAPKD) is disordered.

The protein belongs to the universal ribosomal protein uS12 family. Part of the 30S ribosomal subunit. Contacts proteins S8 and S17. May interact with IF1 in the 30S initiation complex.

Functionally, with S4 and S5 plays an important role in translational accuracy. In terms of biological role, interacts with and stabilizes bases of the 16S rRNA that are involved in tRNA selection in the A site and with the mRNA backbone. Located at the interface of the 30S and 50S subunits, it traverses the body of the 30S subunit contacting proteins on the other side and probably holding the rRNA structure together. The combined cluster of proteins S8, S12 and S17 appears to hold together the shoulder and platform of the 30S subunit. This is Small ribosomal subunit protein uS12 from Prochlorococcus marinus (strain MIT 9301).